The sequence spans 595 residues: Beta-lactamase-like protein ARB_00930 (595 aa).

A signal peptide spans 1-18 (MVVCFLWLLLPYAATTLS). N-linked (GlcNAc...) asparagine glycosylation is found at Asn70 and Asn102. Catalysis depends on Ser117, which acts as the Acyl-ester intermediate. Residues Asn147, Asn156, and Asn195 are each glycosylated (N-linked (GlcNAc...) asparagine). Tyr235 acts as the Proton acceptor in catalysis. N-linked (GlcNAc...) asparagine glycosylation is found at Asn249, Asn461, and Asn473.

This sequence belongs to the beta-lactamase family.

The protein localises to the secreted. It carries out the reaction a beta-lactam + H2O = a substituted beta-amino acid. The polypeptide is Beta-lactamase-like protein ARB_00930 (Arthroderma benhamiae (strain ATCC MYA-4681 / CBS 112371) (Trichophyton mentagrophytes)).